Consider the following 167-residue polypeptide: NAD(P)H-quinone oxidoreductase subunit I, chloroplastic (167 aa).

2 consecutive 4Fe-4S ferredoxin-type domains span residues 55–84 (GRIH…VDWK) and 95–124 (LNYS…MTEE). 8 residues coordinate [4Fe-4S] cluster: Cys-64, Cys-67, Cys-70, Cys-74, Cys-104, Cys-107, Cys-110, and Cys-114.

The protein belongs to the complex I 23 kDa subunit family. In terms of assembly, NDH is composed of at least 16 different subunits, 5 of which are encoded in the nucleus. The cofactor is [4Fe-4S] cluster.

The protein resides in the plastid. It is found in the chloroplast thylakoid membrane. It catalyses the reaction a plastoquinone + NADH + (n+1) H(+)(in) = a plastoquinol + NAD(+) + n H(+)(out). The catalysed reaction is a plastoquinone + NADPH + (n+1) H(+)(in) = a plastoquinol + NADP(+) + n H(+)(out). In terms of biological role, NDH shuttles electrons from NAD(P)H:plastoquinone, via FMN and iron-sulfur (Fe-S) centers, to quinones in the photosynthetic chain and possibly in a chloroplast respiratory chain. The immediate electron acceptor for the enzyme in this species is believed to be plastoquinone. Couples the redox reaction to proton translocation, and thus conserves the redox energy in a proton gradient. This Aethionema grandiflorum (Persian stone-cress) protein is NAD(P)H-quinone oxidoreductase subunit I, chloroplastic.